The sequence spans 713 residues: Constitutive lysine decarboxylase (713 aa).

The residue at position 367 (K367) is an N6-(pyridoxal phosphate)lysine.

The protein belongs to the Orn/Lys/Arg decarboxylase class-I family. In terms of assembly, homodecamer; built of five dimers associated in a 5-fold symmetrical double-ring. Pyridoxal 5'-phosphate is required as a cofactor.

It catalyses the reaction L-lysine + H(+) = cadaverine + CO2. Plays a role in lysine utilization by acting as a lysine decarboxylase. This is Constitutive lysine decarboxylase (ldcC) from Escherichia coli (strain K12).